We begin with the raw amino-acid sequence, 136 residues long: ATP synthase epsilon chain (136 aa).

It belongs to the ATPase epsilon chain family. As to quaternary structure, F-type ATPases have 2 components, CF(1) - the catalytic core - and CF(0) - the membrane proton channel. CF(1) has five subunits: alpha(3), beta(3), gamma(1), delta(1), epsilon(1). CF(0) has three main subunits: a, b and c.

It is found in the cell membrane. Produces ATP from ADP in the presence of a proton gradient across the membrane. In Ureaplasma urealyticum serovar 10 (strain ATCC 33699 / Western), this protein is ATP synthase epsilon chain.